The sequence spans 1218 residues: Chitin synthase 4 (1218 aa).

2 disordered regions span residues 1–93 (MAEP…PERN) and 132–190 (TVSS…RRQK). The span at 14–34 (TRDKSHSPYRESPSRRLRDVE) shows a compositional bias: basic and acidic residues. A glycan (N-linked (GlcNAc...) asparagine) is linked at asparagine 50. Composition is skewed to polar residues over residues 71–80 (SNPNPMSQSD) and 133–142 (VSSGSTQQDT). The span at 175–190 (RKDTRNLTEEEKRRQK) shows a compositional bias: basic and acidic residues. Asparagine 180 carries an N-linked (GlcNAc...) asparagine glycan. The next 2 helical transmembrane spans lie at 200–220 (IWNI…LQCF) and 235–255 (VGLI…TFGF). Residues asparagine 365, asparagine 404, and asparagine 426 are each glycosylated (N-linked (GlcNAc...) asparagine). The helical transmembrane segment at 487–507 (VVLYVSLVFILAIVAAKFFLA) threads the bilayer. Disordered regions lie at residues 548 to 570 (PKIT…RGSM) and 582 to 606 (YAVD…AKLL). A compositionally biased stretch (polar residues) spans 553 to 562 (PASTVTGSDG). Residues asparagine 617, asparagine 903, and asparagine 1030 are each glycosylated (N-linked (GlcNAc...) asparagine). A run of 3 helical transmembrane segments spans residues 1062–1082 (IGTL…IISI), 1087–1107 (VPVI…ILIV), and 1115–1135 (YILW…VLPA). Positions 1188-1218 (QANGSVWNQQPPTRPPSGYGSMHGFEPYRDY) are disordered. Residues 1189-1198 (ANGSVWNQQP) show a composition bias toward polar residues. N-linked (GlcNAc...) asparagine glycosylation occurs at asparagine 1190.

The protein belongs to the chitin synthase family. Class IV subfamily. Maximal activity requires trypsin activation, suggesting a zymogenic nature.

It localises to the cell membrane. The catalysed reaction is [(1-&gt;4)-N-acetyl-beta-D-glucosaminyl](n) + UDP-N-acetyl-alpha-D-glucosamine = [(1-&gt;4)-N-acetyl-beta-D-glucosaminyl](n+1) + UDP + H(+). Activity is stimulated by Mg(2+), and is more inhibited by polyoxin D than by nikkomycin. Functionally, polymerizes chitin, a structural polymer of the cell wall and septum, by transferring the sugar moiety of UDP-GlcNAc to the non-reducing end of the growing chitin polymer. CHS4 synthesizes a large amount of chitin and appears to play a role in the process of cell separation. CHS4 is particularly well suited for functioning at the higher temperatures associated with its poorly characterized saprophic environment and with human infection. In Exophiala dermatitidis (strain ATCC 34100 / CBS 525.76 / NIH/UT8656) (Black yeast), this protein is Chitin synthase 4.